The primary structure comprises 219 residues: Lipoprotein-releasing system ATP-binding protein LolD (219 aa).

The region spanning 5-219 (LKAGDIFKTY…KVVMQDGVII (215 aa)) is the ABC transporter domain. 37-44 (GASGAGKS) is an ATP binding site.

This sequence belongs to the ABC transporter superfamily. Lipoprotein translocase (TC 3.A.1.125) family. The complex is composed of two ATP-binding proteins (LolD) and two transmembrane proteins (LolC and LolE).

The protein localises to the cell inner membrane. Its function is as follows. Part of the ABC transporter complex LolCDE involved in the translocation of mature outer membrane-directed lipoproteins, from the inner membrane to the periplasmic chaperone, LolA. Responsible for the formation of the LolA-lipoprotein complex in an ATP-dependent manner. The sequence is that of Lipoprotein-releasing system ATP-binding protein LolD from Cytophaga hutchinsonii (strain ATCC 33406 / DSM 1761 / CIP 103989 / NBRC 15051 / NCIMB 9469 / D465).